We begin with the raw amino-acid sequence, 370 residues long: Metalloproteinase (370 aa).

The N-terminal stretch at 1-15 (MYLAYIFFLFATVSA) is a signal peptide. In terms of domain architecture, Peptidase M12B spans 170-370 (IVIEVLLVTD…DNYGKIFRMF (201 aa)). Asn-226 is a glycosylation site (N-linked (GalNAc...) asparagine). Zn(2+) is bound at residue His-320. Residue Glu-321 is part of the active site. Zn(2+) contacts are provided by His-324 and His-330.

Belongs to the venom metalloproteinase (M12B) family. As to expression, expressed by the venom gland.

The protein localises to the secreted. Metalloprotease that may disrupt the cell matrix and the process of clotting blood or hemolymph. The sequence is that of Metalloproteinase from Tityus obscurus (Amazonian scorpion).